The chain runs to 78 residues: Mu-conotoxin BuIIIB (78 aa).

Residues 1–22 (MMSKLGVLLTICLLLFPLFALP) form the signal peptide. Positions 23–51 (QDGDQPADRPAERMQDDISSEQNPLLEKR) are excised as a propeptide. The segment at 26–46 (DQPADRPAERMQDDISSEQNP) is disordered. Over residues 28–38 (PADRPAERMQD) the composition is skewed to basic and acidic residues. 3 disulfides stabilise this stretch: Cys56-Cys68, Cys57-Cys74, and Cys64-Cys75. At Cys75 the chain carries Cysteine amide.

This sequence belongs to the conotoxin M superfamily. Expressed by the venom duct.

The protein localises to the secreted. Its function is as follows. Mu-conotoxins block voltage-gated sodium channels (Nav). This synthetic toxin potently blocks rNav1.4/SCN4A (Kd=0.34-3.6 nM), rNav1.2/SCN2A (Kd=13 nM), rNav1.3/SCN3A (Kd=200 nM), rNav1.1/SCN1A (Kd=360 nM), mNav1.6/SCN8A (IC(50)=1.8 uM), rNav1.5/SCN5A (IC(50)=9 uM), rNav1.6/SCN8A (IC(50)&gt;30 uM). It is noteworthy that the toxin is 50-fold more potent on mouse Nav1.6 than on rat Nav1.6. The block of SCN4A is very slowly reversible. The sequence is that of Mu-conotoxin BuIIIB from Conus bullatus (Bubble cone).